The sequence spans 95 residues: Small ribosomal subunit protein uS19 (95 aa).

Belongs to the universal ribosomal protein uS19 family.

In terms of biological role, protein S19 forms a complex with S13 that binds strongly to the 16S ribosomal RNA. This Chloroflexus aggregans (strain MD-66 / DSM 9485) protein is Small ribosomal subunit protein uS19.